The primary structure comprises 215 residues: Ion-translocating oxidoreductase complex subunit G (215 aa).

A helical transmembrane segment spans residues 9-29 (GLLLSGFALICTAAVALVNEA). T176 bears the FMN phosphoryl threonine mark.

It belongs to the RnfG family. The complex is composed of six subunits: RnfA, RnfB, RnfC, RnfD, RnfE and RnfG. FMN is required as a cofactor.

It localises to the cell inner membrane. Part of a membrane-bound complex that couples electron transfer with translocation of ions across the membrane. This is Ion-translocating oxidoreductase complex subunit G from Shewanella amazonensis (strain ATCC BAA-1098 / SB2B).